A 499-amino-acid chain; its full sequence is MTATASALRMRGISKIFPGVKALSNVNFTVEYGRIHAVVGENGAGKSTLMKILSGSYAPTTGTTEIAGVEVQMRRPADAQKLGIRMVHQELNLVPDLTVAENIYLGRMPHRRFLVDRQAMLRKAAAVLKELEAAIDPKARLGDLPISQQQLVEIAKSYSADPRIIVLDEPTSSLSEHETTALFSILRKMKSQGIAIIYISHRLKEVLDIADDVTILRDGSMIDTRPAAGITAAEMIRLMVGREVANVFPKTPSKIGPVAFKVTGLSDGEKFHDVGFDVRSGEILGLTGLVGAGRTEVAQAIFGLAPLATGRIEINGKAVTIGSPAAAVKAGVAYVPEDRKGDGIVPSMSVRENISLPVLRRLSRLGRIGMSRDRGLAAKYTRDFSIVPPDPERRINLLSGGNQQKAIISRWLAAGPKVLILDEPTRGVDVGAKAEIHRIIGELVAGGMAVVMISSELPEVMGVCDRVVVMRDGRASSPIARGDLTEERIMALATGEEPA.

ABC transporter domains lie at 8 to 243 (LRMR…VGRE) and 253 to 497 (SKIG…TGEE). 40 to 47 (GENGAGKS) lines the ATP pocket.

The protein belongs to the ABC transporter superfamily. Carbohydrate importer 2 (CUT2) (TC 3.A.1.2) family.

It is found in the cell inner membrane. The catalysed reaction is D-ribose(out) + ATP + H2O = D-ribose(in) + ADP + phosphate + H(+). It carries out the reaction D-galactose(out) + ATP + H2O = D-galactose(in) + ADP + phosphate + H(+). Functionally, part of an ABC transporter complex involved in carbohydrate import. Could be involved in ribose, galactose and/or methyl galactoside import. Responsible for energy coupling to the transport system. This Agrobacterium fabrum (strain C58 / ATCC 33970) (Agrobacterium tumefaciens (strain C58)) protein is Putative ribose/galactose/methyl galactoside import ATP-binding protein 3.